The primary structure comprises 329 residues: Probable nicotianamine synthase 7 (329 aa).

It belongs to the nicotianamine synthase (NAS)-like family.

It catalyses the reaction 3 S-adenosyl-L-methionine = nicotianamine + 3 S-methyl-5'-thioadenosine + 3 H(+). Its function is as follows. Synthesizes nicotianamine, a polyamine that is the first intermediate in the synthesis of the phytosiderophores of the mugineic acid type found in gramineae which serves as a sensor for the physiological iron status within the plant, and/or might be involved in the transport of iron. This is Probable nicotianamine synthase 7 (NAS7) from Hordeum vulgare (Barley).